The sequence spans 69 residues: Peptide Hact-1 (69 aa).

Residues 1-21 (MDRKFHLCLLLVILGTIIVQG) form the signal peptide. Positions 22-57 (APLENENDADPDKPQKYRYYLKRATTEKKDNDPAKP) are excised as a propeptide. Residues C59 and C68 are joined by a disulfide bond.

Tentacle (ecto and/or endoderm tissue), and possibly also nematoblasts.

It is found in the secreted. The protein resides in the nematocyst. In terms of biological role, peptide with unknown function. Has a limited effect on human peripheral blood mononuclear cells. Does not show activity against both Gram-positive and Gram-negative bacteria nor is it active on the 26 voltage-gated ion channels tested. The chain is Peptide Hact-1 from Heliofungia actiniformis (Mushroom coral).